Consider the following 246-residue polypeptide: Electron transfer flavoprotein beta subunit lysine methyltransferase (246 aa).

It belongs to the methyltransferase superfamily. ETFBKMT family.

It localises to the cytoplasm. Its subcellular location is the mitochondrion matrix. The catalysed reaction is L-lysyl-[protein] + 3 S-adenosyl-L-methionine = N(6),N(6),N(6)-trimethyl-L-lysyl-[protein] + 3 S-adenosyl-L-homocysteine + 3 H(+). Its function is as follows. Protein-lysine methyltransferase that selectively trimethylates the flavoprotein ETFB in mitochondria. Thereby, may negatively regulate the function of ETFB in electron transfer from Acyl-CoA dehydrogenases to the main respiratory chain. The protein is Electron transfer flavoprotein beta subunit lysine methyltransferase (etfbkmt) of Xenopus laevis (African clawed frog).